Here is a 597-residue protein sequence, read N- to C-terminus: Blastula protease 10 (597 aa).

The signal sequence occupies residues Met1 to Cys16. Positions Thr17–Lys93 are cleaved as a propeptide — activation peptide. Positions Asp24 to Asp67 are disordered. One can recognise a Peptidase M12A domain in the interval Lys93–Asp294. 9 disulfide bridges follow: Cys134-Cys293, Cys162-Cys182, Cys299-Cys315, Cys305-Cys317, Cys319-Cys328, Cys339-Cys365, Cys392-Cys412, Cys484-Cys510, and Cys537-Cys557. His190 contributes to the Zn(2+) binding site. Glu191 is an active-site residue. The Zn(2+) site is built by His194 and His200. The EGF-like domain occupies Asp295 to Glu329. 2 consecutive CUB domains span residues Cys339–Val449 and Cys484–Ile595.

Zn(2+) is required as a cofactor.

It localises to the cytoplasm. Its subcellular location is the perinuclear region. The protein localises to the cell cortex. The protein resides in the secreted. It is found in the extracellular space. In terms of biological role, could be involved in the differentiation of ectodermal lineages and subsequent patterning of the embryo. This chain is Blastula protease 10 (BP10), found in Paracentrotus lividus (Common sea urchin).